A 249-amino-acid chain; its full sequence is 2,3-bisphosphoglycerate-dependent phosphoglycerate mutase (249 aa).

Residues 9–16 (RHGQSQWN), 22–23 (TG), Arg-61, 88–91 (ERHY), Lys-99, 115–116 (RR), and 184–185 (GN) contribute to the substrate site. His-10 serves as the catalytic Tele-phosphohistidine intermediate. Glu-88 functions as the Proton donor/acceptor in the catalytic mechanism.

Belongs to the phosphoglycerate mutase family. BPG-dependent PGAM subfamily. Homodimer.

The enzyme catalyses (2R)-2-phosphoglycerate = (2R)-3-phosphoglycerate. The protein operates within carbohydrate degradation; glycolysis; pyruvate from D-glyceraldehyde 3-phosphate: step 3/5. Functionally, catalyzes the interconversion of 2-phosphoglycerate and 3-phosphoglycerate. The polypeptide is 2,3-bisphosphoglycerate-dependent phosphoglycerate mutase (Stenotrophomonas maltophilia (strain K279a)).